The following is a 1124-amino-acid chain: Putative DNA mismatch repair protein mutS homolog L359 (1124 aa).

779–786 contacts ATP; that stretch reads SNNWAGKS.

This sequence belongs to the DNA mismatch repair MutS family.

Functionally, may be involved in DNA-mismatch repair. This is Putative DNA mismatch repair protein mutS homolog L359 from Acanthamoeba polyphaga (Amoeba).